The sequence spans 171 residues: Co-chaperone protein HscB homolog (171 aa).

The J domain occupies 2-74 (NHFELFGLPL…ISRAEYLLVQ (73 aa)).

The protein belongs to the HscB family. In terms of assembly, interacts with HscA and stimulates its ATPase activity.

Co-chaperone involved in the maturation of iron-sulfur cluster-containing proteins. Seems to help targeting proteins to be folded toward HscA. The polypeptide is Co-chaperone protein HscB homolog (Vibrio atlanticus (strain LGP32) (Vibrio splendidus (strain Mel32))).